A 312-amino-acid chain; its full sequence is Ribonuclease Z (312 aa).

7 residues coordinate Zn(2+): His-62, His-64, Asp-66, His-67, His-144, Asp-215, and His-273. The active-site Proton acceptor is Asp-66.

Belongs to the RNase Z family. In terms of assembly, homodimer. Zn(2+) serves as cofactor.

The enzyme catalyses Endonucleolytic cleavage of RNA, removing extra 3' nucleotides from tRNA precursor, generating 3' termini of tRNAs. A 3'-hydroxy group is left at the tRNA terminus and a 5'-phosphoryl group is left at the trailer molecule.. In terms of biological role, zinc phosphodiesterase, which displays some tRNA 3'-processing endonuclease activity. Probably involved in tRNA maturation, by removing a 3'-trailer from precursor tRNA. The chain is Ribonuclease Z from Prochlorococcus marinus (strain MIT 9312).